A 157-amino-acid polypeptide reads, in one-letter code: Type II restriction enzyme PvuII (157 aa).

2 residues coordinate Mg(2+): Asp-58 and Glu-68.

Homodimer. Mg(2+) serves as cofactor.

The catalysed reaction is Endonucleolytic cleavage of DNA to give specific double-stranded fragments with terminal 5'-phosphates.. In terms of biological role, a P subtype restriction enzyme that recognizes the double-stranded sequence 5'-CAGCTG-3' and cleaves after G-3. This Proteus hauseri protein is Type II restriction enzyme PvuII (pvuIIR).